Reading from the N-terminus, the 182-residue chain is MGFKGTTVIAIKKNGKTVVAADGQVLFGHTVLKSNAIKIRKLLNGKILAGFAGSTSDAITLFEKFEEKIKAKGDGLIDIKRAAVDLAKDWRSDKILHKLEAMMLVADSKNILLISGTGDVVEPEEDVISIGSGGNYAYSAALAYMENKKLSAFEVALRSLKIAARVCIYTNSNIVLEEIENE.

The active site involves Thr-6. Positions 164, 167, and 170 each coordinate Na(+).

The protein belongs to the peptidase T1B family. HslV subfamily. As to quaternary structure, a double ring-shaped homohexamer of HslV is capped on each side by a ring-shaped HslU homohexamer. The assembly of the HslU/HslV complex is dependent on binding of ATP.

It localises to the cytoplasm. It catalyses the reaction ATP-dependent cleavage of peptide bonds with broad specificity.. Its activity is regulated as follows. Allosterically activated by HslU binding. Protease subunit of a proteasome-like degradation complex believed to be a general protein degrading machinery. The chain is ATP-dependent protease subunit HslV from Borrelia garinii subsp. bavariensis (strain ATCC BAA-2496 / DSM 23469 / PBi) (Borreliella bavariensis).